The sequence spans 573 residues: Acetolactate synthase large subunit (573 aa).

Glutamate 51 is a binding site for thiamine diphosphate. Residues arginine 153, 261-282 (HGTL…IGVR), and 304-323 (DIDP…IVGN) each bind FAD. Residues 396–476 (QHQMFAALHY…VVIICLNNHF (81 aa)) form a thiamine pyrophosphate binding region. Mg(2+)-binding residues include aspartate 447 and asparagine 474.

Belongs to the TPP enzyme family. Dimer of large and small chains. The cofactor is Mg(2+). Requires thiamine diphosphate as cofactor.

It catalyses the reaction 2 pyruvate + H(+) = (2S)-2-acetolactate + CO2. Its pathway is amino-acid biosynthesis; L-isoleucine biosynthesis; L-isoleucine from 2-oxobutanoate: step 1/4. It participates in amino-acid biosynthesis; L-valine biosynthesis; L-valine from pyruvate: step 1/4. The chain is Acetolactate synthase large subunit (ilvI) from Haemophilus influenzae (strain ATCC 51907 / DSM 11121 / KW20 / Rd).